Here is a 298-residue protein sequence, read N- to C-terminus: Mitochondrial intermembrane space import and assembly protein 40 (298 aa).

A mitochondrion-targeting transit peptide spans 1-33 (MYRTALRPSQSALRAIRSTTSPSALVSSGARRF). The Mitochondrial matrix segment spans residues 34 to 52 (ASTTSAPKKKSTWKGAAVR). Residues 53–69 (WGLAVAAVYYYNTSPIF) form a helical; Signal-anchor for type II membrane protein membrane-spanning segment. The Mitochondrial intermembrane segment spans residues 70-298 (SDELPETAGT…TAANNNKKQQ (229 aa)). The interval 101–159 (RQAAEHAAARKAAQAAAKAAATPATPSESVEEQITKAEAEAEAVPEGDSKPRSESTEGV) is disordered. A compositionally biased stretch (low complexity) spans 110-121 (RKAAQAAAKAAA). 3 disulfides stabilise this stretch: Cys191–Cys193, Cys202–Cys235, and Cys212–Cys225. The CHCH domain maps to 199 to 243 (HGPCGEEFKAAFSCFVYSTEEPKGMDCIEKFSHMQDCFRKYPEVY). 2 short sequence motifs (cx9C motif) span residues 202 to 212 (CGEEFKAAFSC) and 225 to 235 (CIEKFSHMQDC). The interval 248 to 298 (ADDEEAERASAAAPAAEGTPAKEEPVENKKEEALEPATHDATAANNNKKQQ) is disordered. Residues 256–266 (ASAAAPAAEGT) are compositionally biased toward low complexity. Positions 267–280 (PAKEEPVENKKEEA) are enriched in basic and acidic residues.

In terms of assembly, monomer. Cu(2+) serves as cofactor. The cofactor is Zn(2+).

It is found in the mitochondrion inner membrane. Functionally, required for the import and folding of small cysteine-containing proteins (small Tim) in the mitochondrial intermembrane space (IMS). Forms a redox cycle with ERV1 that involves a disulfide relay system. Precursor proteins to be imported into the IMS are translocated in their reduced form into the mitochondria. The oxidized form of MIA40 forms a transient intermolecular disulfide bridge with the reduced precursor protein, resulting in oxidation of the precursor protein that now contains an intramolecular disulfide bond and is able to undergo folding in the IMS. This Neurospora crassa (strain ATCC 24698 / 74-OR23-1A / CBS 708.71 / DSM 1257 / FGSC 987) protein is Mitochondrial intermembrane space import and assembly protein 40 (mia-40).